The chain runs to 629 residues: 5-aminolevulinate synthase, mitochondrial (629 aa).

Residues 1-69 (MDSVLRQSKA…VQSARTGGRA (69 aa)) constitute a mitochondrion transit peptide. Residues Arg-155, Ser-268, and Lys-287 each coordinate substrate. Ser-320, His-348, and Thr-388 together coordinate pyridoxal 5'-phosphate. Residue Lys-391 is part of the active site. At Lys-391 the chain carries N6-(pyridoxal phosphate)lysine. Pyridoxal 5'-phosphate is bound by residues Thr-420 and Thr-421. A substrate-binding site is contributed by Thr-506.

The protein belongs to the class-II pyridoxal-phosphate-dependent aminotransferase family. As to quaternary structure, homodimer. Pyridoxal 5'-phosphate serves as cofactor.

It localises to the mitochondrion matrix. It catalyses the reaction succinyl-CoA + glycine + H(+) = 5-aminolevulinate + CO2 + CoA. The protein operates within porphyrin-containing compound metabolism; protoporphyrin-IX biosynthesis; 5-aminolevulinate from glycine: step 1/1. Catalyzes the synthesis of 5-aminolevulinate (ALA) from succinyl-CoA and glycine, the first and rate-limiting step in heme biosynthesis. This is 5-aminolevulinate synthase, mitochondrial (alv-1) from Neurospora crassa (strain ATCC 24698 / 74-OR23-1A / CBS 708.71 / DSM 1257 / FGSC 987).